A 614-amino-acid polypeptide reads, in one-letter code: UvrABC system protein C (614 aa).

In terms of domain architecture, GIY-YIG spans Asn-26–Val-104. The UVR domain occupies Ser-215–Val-250.

The protein belongs to the UvrC family. Interacts with UvrB in an incision complex.

The protein resides in the cytoplasm. Its function is as follows. The UvrABC repair system catalyzes the recognition and processing of DNA lesions. UvrC both incises the 5' and 3' sides of the lesion. The N-terminal half is responsible for the 3' incision and the C-terminal half is responsible for the 5' incision. The protein is UvrABC system protein C of Psychrobacter sp. (strain PRwf-1).